A 461-amino-acid chain; its full sequence is Glycine--tRNA ligase (461 aa).

Substrate is bound by residues arginine 99 and glutamate 173. Residues arginine 205–glutamate 207, phenylalanine 215–phenylalanine 220, glutamate 289–leucine 290, and glycine 333–arginine 336 each bind ATP. Phenylalanine 220–glutamate 224 lines the substrate pocket. Glutamate 329–glycine 333 contacts substrate.

The protein belongs to the class-II aminoacyl-tRNA synthetase family. As to quaternary structure, homodimer.

It localises to the cytoplasm. It carries out the reaction tRNA(Gly) + glycine + ATP = glycyl-tRNA(Gly) + AMP + diphosphate. In terms of biological role, catalyzes the attachment of glycine to tRNA(Gly). This Lysinibacillus sphaericus (strain C3-41) protein is Glycine--tRNA ligase.